Reading from the N-terminus, the 370-residue chain is tRNA pseudouridine(27/28) synthase (370 aa).

The active-site Nucleophile is Asp-56. Tyr-111 contacts substrate.

The protein belongs to the tRNA pseudouridine synthase TruA family.

The protein resides in the mitochondrion. The catalysed reaction is uridine(27/28) in mitochondrial tRNA = pseudouridine(27/28) in mitochondrial tRNA. In terms of biological role, mitochondrial-specific pseudouridine synthase catalyzing the formation of pseudouridine at positions 27 and 28 in the anticodon stem and loop of mitochondrial transfer RNAs. In Saccharomyces cerevisiae (strain ATCC 204508 / S288c) (Baker's yeast), this protein is tRNA pseudouridine(27/28) synthase (PUS2).